We begin with the raw amino-acid sequence, 253 residues long: Ribosome maturation protein SBDS (253 aa).

Belongs to the SDO1/SBDS family. In terms of assembly, associates with the 60S ribosomal subunit.

Its subcellular location is the cytoplasm. It is found in the nucleus. It localises to the nucleolus. The protein localises to the nucleoplasm. The protein resides in the cytoskeleton. Its subcellular location is the spindle. Required for the assembly of mature ribosomes and ribosome biogenesis. Together with K10C3.5b/EFL1, triggers the GTP-dependent release of ribosome maturation factors from 60S pre-ribosomes in the cytoplasm, thereby activating ribosomes for translation competence by allowing 80S ribosome assembly. Required for normal levels of protein synthesis. May play a role in cellular stress resistance. May play a role in cellular response to DNA damage. May play a role in cell proliferation. The sequence is that of Ribosome maturation protein SBDS (sbds-1) from Caenorhabditis elegans.